A 394-amino-acid polypeptide reads, in one-letter code: Nicotinate phosphoribosyltransferase (394 aa).

Residue His218 is modified to Phosphohistidine; by autocatalysis.

It belongs to the NAPRTase family. Post-translationally, transiently phosphorylated on a His residue during the reaction cycle. Phosphorylation strongly increases the affinity for substrates and increases the rate of nicotinate D-ribonucleotide production. Dephosphorylation regenerates the low-affinity form of the enzyme, leading to product release.

It carries out the reaction nicotinate + 5-phospho-alpha-D-ribose 1-diphosphate + ATP + H2O = nicotinate beta-D-ribonucleotide + ADP + phosphate + diphosphate. Its pathway is cofactor biosynthesis; NAD(+) biosynthesis; nicotinate D-ribonucleotide from nicotinate: step 1/1. Functionally, catalyzes the synthesis of beta-nicotinate D-ribonucleotide from nicotinate and 5-phospho-D-ribose 1-phosphate at the expense of ATP. This chain is Nicotinate phosphoribosyltransferase, found in Xylella fastidiosa (strain 9a5c).